A 347-amino-acid polypeptide reads, in one-letter code: Probable replication factor C subunit 3 (347 aa).

It belongs to the activator 1 small subunits family. In terms of assembly, heteropentamer of various rfc subunits that forms a complex (RFC) with PCNA in the presence of ATP.

Its subcellular location is the nucleus. Its function is as follows. The elongation of primed DNA templates by DNA polymerase delta and epsilon requires the action of the accessory proteins PCNA and activator 1. This chain is Probable replication factor C subunit 3 (rfc3), found in Dictyostelium discoideum (Social amoeba).